The following is a 180-amino-acid chain: Large ribosomal subunit protein eL18 (180 aa).

The segment at 152 to 180 is disordered; the sequence is FGPAPGVPGSHTKPYVISKSRERTNAHRA. A compositionally biased stretch (basic and acidic residues) spans 170–180; the sequence is KSRERTNAHRA.

The protein belongs to the eukaryotic ribosomal protein eL18 family.

The protein resides in the cytoplasm. This chain is Large ribosomal subunit protein eL18 (RPL18), found in Taenia asiatica (Asian tapeworm).